The primary structure comprises 166 residues: MEERENIKEIRVGIADLNTAFSPNRIITVGLGSCIGIAIYDSKNKLGGLSHIMLPDSTQFSKVTNPYKFADLAIPILIKKMEGMGANIRNMKAKIAGGASMFNFSDKNMNMDIGNRNGISVKKVLKELNVPLLSQDIGGNKGRTMIFNTLDGSVDIRTVGMGIRKI.

It belongs to the CheD family.

The catalysed reaction is L-glutaminyl-[protein] + H2O = L-glutamyl-[protein] + NH4(+). Functionally, probably deamidates glutamine residues to glutamate on methyl-accepting chemotaxis receptors (MCPs), playing an important role in chemotaxis. The protein is Probable chemoreceptor glutamine deamidase CheD of Clostridium acetobutylicum (strain ATCC 824 / DSM 792 / JCM 1419 / IAM 19013 / LMG 5710 / NBRC 13948 / NRRL B-527 / VKM B-1787 / 2291 / W).